Consider the following 343-residue polypeptide: Heme A synthase (343 aa).

8 helical membrane-spanning segments follow: residues 13-33 (VAIW…VGGA), 96-116 (HRLL…VFLI), 130-150 (AMLG…SSGL), 161-181 (LMTH…TALD), 197-217 (GWAL…ALVA), 258-278 (FNHR…VVLA), 294-314 (AVAA…MAAV), and 318-338 (LGVL…AFAW). Heme is bound at residue His-260. His-322 contacts heme.

This sequence belongs to the COX15/CtaA family. Type 2 subfamily. In terms of assembly, interacts with CtaB. Heme b is required as a cofactor.

Its subcellular location is the cell membrane. It catalyses the reaction Fe(II)-heme o + 2 A + H2O = Fe(II)-heme a + 2 AH2. Its pathway is porphyrin-containing compound metabolism; heme A biosynthesis; heme A from heme O: step 1/1. Catalyzes the conversion of heme O to heme A by two successive hydroxylations of the methyl group at C8. The first hydroxylation forms heme I, the second hydroxylation results in an unstable dihydroxymethyl group, which spontaneously dehydrates, resulting in the formyl group of heme A. In Caulobacter vibrioides (strain ATCC 19089 / CIP 103742 / CB 15) (Caulobacter crescentus), this protein is Heme A synthase.